A 488-amino-acid chain; its full sequence is Metalloreductase STEAP3 (488 aa).

Over 1 to 207 (MSGEMDKPLI…AREVEAIPLR (207 aa)) the chain is Cytoplasmic. Phosphoserine occurs at positions 11, 17, and 20. NADP(+)-binding positions include 36–39 (SGDF), 58–59 (SR), 91–98 (VFREHYSS), N116, and A151. Residues W152 and D160 each coordinate FAD. The chain crosses the membrane as a helical span at residues 208 to 228 (LLPSWKVPTLLALGLFVCFYA). Y229 serves as a coordination point for Fe(3+). The Vesicular portion of the chain corresponds to 229–258 (YNFIRDVLQPYIRKDENKFYKMPLSVVNTT). N256 is a glycosylation site (N-linked (GlcNAc...) asparagine). Residues 259–279 (LPCVAYVLLSLVYLPGVLAAA) form a helical membrane-spanning segment. Residues 259–407 (LPCVAYVLLS…LGFVALMLST (149 aa)) enclose the Ferric oxidoreductase domain. Topologically, residues 280-304 (LQLRRGTKYQRFPDWLDHWLQHRKQ) are cytoplasmic. The FAD site is built by Q281, R302, and K303. The helical transmembrane segment at 305-325 (IGLLSFFFAMLHALYSFCLPL) threads the bilayer. A heme b-binding site is contributed by H316. A Fe(3+)-binding site is contributed by Y319. At 326-358 (RRSHRYDLVNLAVKQVLANKSRLWVEEEVWRME) the chain is on the vesicular side. The chain crosses the membrane as a helical span at residues 359-379 (IYLSLGVLALGMLSLLAVTSI). Position 378 (S378) interacts with FAD. Over 380–390 (PSIANSLNWKE) the chain is Cytoplasmic. A helical transmembrane segment spans residues 391–411 (FSFVQSTLGFVALMLSTMHTL). Residue Q395 participates in FAD binding. A heme b-binding site is contributed by H409. Residues 412–433 (TYGWTRAFEENHYKFYLPPTFT) lie on the Vesicular side of the membrane. Residues 434-454 (LTLLLPCVIILAKGLFLLPCL) form a helical membrane-spanning segment. Residues 455–488 (SHRLTKIRRGWERDGAVKFMLPAGHTQGEKTSHV) are Cytoplasmic-facing. S486 bears the Phosphoserine mark.

The protein belongs to the STEAP family. In terms of assembly, homodimer. Interacts with BNIP3L, MYT1, RHBDL4/RHBDD1 and TCTP. It depends on FAD as a cofactor. Heme b is required as a cofactor. Post-translationally, proteolytically cleaved by RHBDL4/RHBDD1. RHBDL4/RHBDD1-induced cleavage occurs at multiple sites in a glycosylation-independent manner. Glycosylated.

The protein resides in the endosome membrane. It catalyses the reaction 2 Fe(2+) + NADP(+) + H(+) = 2 Fe(3+) + NADPH. The catalysed reaction is 2 Cu(+) + NADP(+) + H(+) = 2 Cu(2+) + NADPH. In terms of biological role, integral membrane protein that functions as a NADPH-dependent ferric-chelate reductase, using NADPH from one side of the membrane to reduce a Fe(3+) chelate that is bound on the other side of the membrane. Mediates sequential transmembrane electron transfer from NADPH to FAD and onto heme, and finally to the Fe(3+) chelate. Can also reduce Cu(2+) to Cu(1+). Mediates efficient transferrin-dependent iron uptake in erythroid cells. May play a role downstream of p53/TP53 to interface apoptosis and cell cycle progression. Indirectly involved in exosome secretion by facilitating the secretion of proteins such as TCTP. The chain is Metalloreductase STEAP3 (Steap3) from Rattus norvegicus (Rat).